The following is a 247-amino-acid chain: 7-cyano-7-deazaguanine synthase (247 aa).

Residue 21–31 (FSGGQDSTACL) participates in ATP binding. Residues Cys209, Cys224, Cys227, and Cys230 each coordinate Zn(2+).

It belongs to the QueC family. It depends on Zn(2+) as a cofactor.

It catalyses the reaction 7-carboxy-7-deazaguanine + NH4(+) + ATP = 7-cyano-7-deazaguanine + ADP + phosphate + H2O + H(+). It participates in purine metabolism; 7-cyano-7-deazaguanine biosynthesis. Its function is as follows. Catalyzes the ATP-dependent conversion of 7-carboxy-7-deazaguanine (CDG) to 7-cyano-7-deazaguanine (preQ(0)). The sequence is that of 7-cyano-7-deazaguanine synthase from Halorhodospira halophila (strain DSM 244 / SL1) (Ectothiorhodospira halophila (strain DSM 244 / SL1)).